We begin with the raw amino-acid sequence, 144 residues long: Ig heavy chain V region MOPC 141 (144 aa).

A signal peptide spans 1 to 19 (MAVLALLFCLATFPSCILS). An Ig-like domain is found at 20–130 (QVQLKESGPG…YYGRSDKYFT (111 aa)).

This is Ig heavy chain V region MOPC 141 from Mus musculus (Mouse).